An 80-amino-acid chain; its full sequence is Putative membrane protein insertion efficiency factor (80 aa).

This sequence belongs to the UPF0161 family.

Its subcellular location is the cell membrane. In terms of biological role, could be involved in insertion of integral membrane proteins into the membrane. The polypeptide is Putative membrane protein insertion efficiency factor (Limosilactobacillus fermentum (strain NBRC 3956 / LMG 18251) (Lactobacillus fermentum)).